Here is a 257-residue protein sequence, read N- to C-terminus: NAD-capped RNA hydrolase NudC (257 aa).

Residues Lys-25 and Arg-69 each contribute to the substrate site. Zn(2+)-binding residues include Cys-98 and Cys-101. Position 111 (Glu-111) interacts with substrate. Zn(2+)-binding residues include Cys-116 and Cys-119. Tyr-124 contributes to the substrate binding site. Residues 125-248 enclose the Nudix hydrolase domain; the sequence is PQIAPCIIVA…TVARRLIEDT (124 aa). A divalent metal cation-binding residues include Ala-158, Glu-174, and Glu-178. The Nudix box motif lies at 159–180; that stretch reads GFVEVGETLEQAVAREVMEESG. 192–199 contacts substrate; it reads QPWPFPQS. Glu-219 is an a divalent metal cation binding site. Ala-241 serves as a coordination point for substrate.

Belongs to the Nudix hydrolase family. NudC subfamily. Homodimer. The cofactor is Mg(2+). Mn(2+) is required as a cofactor. Requires Zn(2+) as cofactor.

The enzyme catalyses a 5'-end NAD(+)-phospho-ribonucleoside in mRNA + H2O = a 5'-end phospho-adenosine-phospho-ribonucleoside in mRNA + beta-nicotinamide D-ribonucleotide + 2 H(+). The catalysed reaction is NAD(+) + H2O = beta-nicotinamide D-ribonucleotide + AMP + 2 H(+). It catalyses the reaction NADH + H2O = reduced beta-nicotinamide D-ribonucleotide + AMP + 2 H(+). Its function is as follows. mRNA decapping enzyme that specifically removes the nicotinamide adenine dinucleotide (NAD) cap from a subset of mRNAs by hydrolyzing the diphosphate linkage to produce nicotinamide mononucleotide (NMN) and 5' monophosphate mRNA. The NAD-cap is present at the 5'-end of some mRNAs and stabilizes RNA against 5'-processing. Has preference for mRNAs with a 5'-end purine. Catalyzes the hydrolysis of a broad range of dinucleotide pyrophosphates. This chain is NAD-capped RNA hydrolase NudC, found in Shigella flexneri serotype 5b (strain 8401).